Here is a 183-residue protein sequence, read N- to C-terminus: Holliday junction branch migration complex subunit RuvA (183 aa).

The domain I stretch occupies residues 1–64 (MIVAIEGIVS…EDSHKLYGFL (64 aa)). Positions 65–138 (DTNEQRMFEL…SDAKINIENS (74 aa)) are domain II. A region of interest (flexible linker) is located at residue serine 138. The segment at 138–183 (SNQDHAQALAALLSLGFKQENILKVLRTCESQNTSELIKEALKKLA) is domain III.

It belongs to the RuvA family. In terms of assembly, homotetramer. Forms an RuvA(8)-RuvB(12)-Holliday junction (HJ) complex. HJ DNA is sandwiched between 2 RuvA tetramers; dsDNA enters through RuvA and exits via RuvB. An RuvB hexamer assembles on each DNA strand where it exits the tetramer. Each RuvB hexamer is contacted by two RuvA subunits (via domain III) on 2 adjacent RuvB subunits; this complex drives branch migration. In the full resolvosome a probable DNA-RuvA(4)-RuvB(12)-RuvC(2) complex forms which resolves the HJ.

It is found in the cytoplasm. The RuvA-RuvB-RuvC complex processes Holliday junction (HJ) DNA during genetic recombination and DNA repair, while the RuvA-RuvB complex plays an important role in the rescue of blocked DNA replication forks via replication fork reversal (RFR). RuvA specifically binds to HJ cruciform DNA, conferring on it an open structure. The RuvB hexamer acts as an ATP-dependent pump, pulling dsDNA into and through the RuvAB complex. HJ branch migration allows RuvC to scan DNA until it finds its consensus sequence, where it cleaves and resolves the cruciform DNA. This chain is Holliday junction branch migration complex subunit RuvA, found in Campylobacter lari (strain RM2100 / D67 / ATCC BAA-1060).